A 91-amino-acid chain; its full sequence is Probable Fe(2+)-trafficking protein (91 aa).

Belongs to the Fe(2+)-trafficking protein family. As to quaternary structure, monomer.

In terms of biological role, could be a mediator in iron transactions between iron acquisition and iron-requiring processes, such as synthesis and/or repair of Fe-S clusters in biosynthetic enzymes. This chain is Probable Fe(2+)-trafficking protein, found in Citrobacter koseri (strain ATCC BAA-895 / CDC 4225-83 / SGSC4696).